Here is a 160-residue protein sequence, read N- to C-terminus: MHTPENRPALTPGLTLVRLPHGEGLDLPAYETAGAAGMDLRAALPADEPMTIRPGERALVPTGFIFEIPAGHEGQIRPRSGLAFKHGITCLNTPGTVDSDYRGEVKVLLVNLGAEDFAVERGMRIAQMVIAPVTRLAIREAGGATTTARGAGGFGSTGTK.

Substrate-binding positions include 79–81 (RSG), asparagine 92, 96–98 (TVD), and lysine 106.

The protein belongs to the dUTPase family. Mg(2+) serves as cofactor.

The catalysed reaction is dUTP + H2O = dUMP + diphosphate + H(+). It functions in the pathway pyrimidine metabolism; dUMP biosynthesis; dUMP from dCTP (dUTP route): step 2/2. Functionally, this enzyme is involved in nucleotide metabolism: it produces dUMP, the immediate precursor of thymidine nucleotides and it decreases the intracellular concentration of dUTP so that uracil cannot be incorporated into DNA. The sequence is that of Deoxyuridine 5'-triphosphate nucleotidohydrolase from Rhizobium meliloti (strain 1021) (Ensifer meliloti).